We begin with the raw amino-acid sequence, 1120 residues long: MKLETAYNYFEKLEKDERLQNYISQANSRYILYIANEPLENFPHYTVNLDEKCTHIAFSYLNCGWRFFLEKISDEATKCMEKASEILEYLYAYSDCEKLYKEYYRLVCSLAYYISAQYSKSFIILGKYNSDSYIGKITKLFLTRNFIELERQLEIKYLKNDEETSSENKDNIIYEKILSNAFLHIINFIRTGKMESLESSKDMVRDLITLADINNEPHMWWYFRLLYLVFEEYEDGSLWKVVPPLLDNDDISAKYIYANLYKKKPITEFFKSQRECLDGELLKNDGFVIGMPTSSGKTKVAEVTILKTLTKSPGALCIYIAPYRSLANEVEFSLSSMFEIMGYQVSQLYGGSQTSPLDRQLTKQANVIIVTPEKAKSMLRSNKDLKDRIQLVIIDEGHLVGFQPRYITGELLIEELKIVLKKNNGQLVLLSAVLPNISDFSLWIGEDDKAKRMSVWRPSSQRFGELSLARNTVNINWEGETPSYNKNFITPKLVKPERITKTGRKYAAKYFPADKKEGVAATATKMLDVGSVLIYVGRSNMVLSQARIVSKLFEEKGIEHEWRNKNDWLFVELACIEEYGEDSEILSLLKQGIVPHSSKLPTEVRQSIEKLMANDNPKIIIATSTLGQGVNIGVSTVIVSNVRLDESNTVKVNDFWNIAGRAGRAFTDTEGKILYAIDRNKSQWSIYNQIQMKEMYFKYRNIEKATSGLYLLLRYLFILSEEFEIEYSLFLELLAENRESIDEQKAVEFFSEADQFLELLDDTLISMDIMNEANVLENSSSWIDDVFRSSLAFIQAKQDQSFSEEKMIEILKARNSGVIKLAGEETKWHSIASSSVPLRASLVIEHRIDELLKYVRKYIDSDKSFEELLSLVMELDIFIDSLPISKIEGIEIGANFSEIREGWFSGTSIHILEKRHENVRSICNEYYSFHFPWIVNAIAQKIKLIDCQEESKVLEQISLFAEIGLNNNKSVKIYLAGIKSRNCATELSEKIGMDNDLVTPVKELLLEFFNLCVVKKEDCSEICFNWLKLLNDEKEAKEYVKVKRRSFQFNIPFDLHDNLLYIKKVQSEIWLCSFDYKIKIPVLKEKALFNECSDIPDIFLRKEKGDVWILDSHNPYIIFY.

The region spanning 278-452 (DGELLKNDGF…WIGEDDKAKR (175 aa)) is the Helicase ATP-binding domain. Position 291 to 298 (291 to 298 (MPTSSGKT)) interacts with ATP. Residues 395 to 398 (DEGH) carry the DEAH box motif. A Helicase C-terminal domain is found at 521–710 (ATATKMLDVG…NIEKATSGLY (190 aa)).

This sequence belongs to the helicase family.

In terms of biological role, component of antiviral defense system Hachiman, composed of HamA and HamB. Expression of Hachiman in B.subtilis (strain BEST7003) confers resistance to phages phi105, phi29, phi3T, rho14, SBSphiJ, SpBeta and SPR. Probably a helicase. The polypeptide is Hachiman protein HamB (Bacillus cereus).